A 327-amino-acid chain; its full sequence is Vacuolar protein sorting-associated protein 26A (327 aa).

The disordered stretch occupies residues R306–M327. At S315 the chain carries Phosphoserine. Positions P316–M327 are enriched in polar residues.

The protein belongs to the VPS26 family. In terms of assembly, component of the heterotrimeric retromer cargo-selective complex (CSC), also described as vacuolar protein sorting subcomplex (VPS), formed by VPS26 (VPS26A or VPS26B), VPS29 and VPS35. The CSC has a highly elongated structure with VPS26 and VPS29 binding independently at opposite distal ends of VPS35 as central platform. The CSC is believed to associate with variable sorting nexins to form functionally distinct retromer complex variants. The originally described retromer complex (also called SNX-BAR retromer) is a pentamer containing the CSC and a heterodimeric membrane-deforming subcomplex formed between SNX1 or SNX2 and SNX5 or SNX6 (also called SNX-BAR subcomplex); the respective CSC and SNX-BAR subcomplexes associate with low affinity. The CSC associates with SNX3 to form a SNX3-retromer complex. The CSC associates with SNX27, the WASH complex and the SNX-BAR subcomplex to form the SNX27-retromer complex. Interacts with VPS29, VPS35, SNX27, SNX1, SNX2, SNX5, SNX6, SNX3, RAB7A, ECPAS, EHD1, WASHC5, SORL1.

The protein localises to the cytoplasm. It is found in the endosome membrane. It localises to the early endosome. Its function is as follows. Acts as a component of the retromer cargo-selective complex (CSC). The CSC is believed to be the core functional component of retromer or respective retromer complex variants acting to prevent missorting of selected transmembrane cargo proteins into the lysosomal degradation pathway. The recruitment of the CSC to the endosomal membrane involves RAB7A and SNX3. The SNX-BAR retromer mediates retrograde transport of cargo proteins from endosomes to the trans-Golgi network (TGN) and is involved in endosome-to-plasma membrane transport for cargo protein recycling. The SNX3-retromer mediates the retrograde endosome-to-TGN transport of WLS distinct from the SNX-BAR retromer pathway. The SNX27-retromer is believed to be involved in endosome-to-plasma membrane trafficking and recycling of a broad spectrum of cargo proteins. The CSC complex seems to act as recruitment hub for other proteins, such as the WASH complex and TBC1D5. Required for retrograde transport of lysosomal enzyme receptor IGF2R. Required to regulate transcytosis of the polymeric immunoglobulin receptor (pIgR-pIgA). Required for the endosomal localization of WASHC2 (indicative for the WASH complex). Required for the endosomal localization of TBC1D5. Mediates retromer cargo recognition of SORL1 and is involved in trafficking of SORL1 implicated in sorting and processing of APP. Involved in retromer-independent lysosomal sorting of F2R. Involved in recycling of ADRB2. Acts redundantly with VSP26B in SNX-27 mediated endocytic recycling of SLC2A1/GLUT1. Enhances the affinity of SNX27 for PDZ-binding motifs in cargo proteins. This Rattus norvegicus (Rat) protein is Vacuolar protein sorting-associated protein 26A (Vps26a).